We begin with the raw amino-acid sequence, 1396 residues long: uncharacterized protein (1396 aa).

Residue 88–95 (AYKKWGRS) coordinates ATP. Disordered regions lie at residues 146-165 (EKIH…LSPT) and 198-388 (KPCS…VKDL). Low complexity predominate over residues 198 to 221 (KPCSYSSSSSSSTVPPASTDTSSP). The segment covering 242–268 (MHEKAQSRSRHEKESKLSSSTIEEKPA) has biased composition (basic and acidic residues). Low complexity predominate over residues 286–300 (SWSSGSSEAGSSSSG). The segment covering 312-327 (VKVRHKAREIRNRKGR) has biased composition (basic residues). Ser-817 and Ser-1083 each carry phosphoserine. The segment at 1113–1137 (PISASELSPGGGSESEFESEKDEAS) is disordered. Phosphoserine occurs at positions 1197 and 1339. The segment at 1347-1396 (TGERGSETKPNGLHRKMCSSASSDTGDTGSEAGGEWVGPSREELFSRTHL) is disordered. Residues 1365-1376 (SSASSDTGDTGS) show a composition bias toward low complexity. Residues 1386-1396 (SREELFSRTHL) show a composition bias toward basic and acidic residues.

This is an uncharacterized protein from Mus musculus (Mouse).